The sequence spans 862 residues: Ubiquitin carboxyl-terminal hydrolase 13 (862 aa).

The UBP-type; degenerate zinc-finger motif lies at 182 to 290 (QASKHAKSLV…KHLAHFGIDM (109 aa)). Residues C206, C209, C226, and H239 each contribute to the Zn(2+) site. Positions 331–860 (TGMKNLGNSC…LGYIYFYHRI (530 aa)) constitute a USP domain. Catalysis depends on C340, which acts as the Nucleophile. 2 consecutive UBA domains span residues 647-688 (DIDE…IIAH) and 722-762 (QPPE…IFSH). H822 acts as the Proton acceptor in catalysis.

It belongs to the peptidase C19 family.

The catalysed reaction is Thiol-dependent hydrolysis of ester, thioester, amide, peptide and isopeptide bonds formed by the C-terminal Gly of ubiquitin (a 76-residue protein attached to proteins as an intracellular targeting signal).. Specifically inhibited by spautin-1 (specific and potent autophagy inhibitor-1), a derivative of MBCQ that binds to USP13 and inhibits deubiquitinase activity. Deubiquitinase that mediates deubiquitination of target proteins and is involved in various processes such as autophagy and endoplasmic reticulum-associated degradation (ERAD). The sequence is that of Ubiquitin carboxyl-terminal hydrolase 13 (USP13) from Gallus gallus (Chicken).